Consider the following 5405-residue polypeptide: IgGFc-binding protein (5405 aa).

The first 23 residues, 1–23, serve as a signal peptide directing secretion; it reads MGALWSWWILWAGATLLWGLTQE. The segment at 24-450 is igGFc-binding; it reads ASVDLKNTGR…EPSCEGMQCA (427 aa). 2 N-linked (GlcNAc...) asparagine glycosylation sites follow: Asn-75 and Asn-91. Residues 470–650 enclose the VWFD 1 domain; that stretch reads AVCRAQGDPH…KLDDGDYLCE (181 aa). 2 disulfide bridges follow: Cys-472–Cys-611 and Cys-494–Cys-649. In terms of domain architecture, TIL 1 spans 745 to 799; that stretch reads CPANSRYELCGPACPTSCNGAAAPSNCSGRPCVEGCVCLPGFVASGGACVPASSC. The VWFD 2 domain maps to 862–1041; sequence GTCQGSGDPH…WQEETRPGCG (180 aa). Disulfide bonds link Cys-864–Cys-1003 and Cys-886–Cys-1040. The region spanning 1136–1189 is the TIL 2 domain; the sequence is CPPHSHYEACSYGCPLSCGDLPVPGGCGSECHEGCVCDEGFALSGESCLPLASC. A VWFD 3 domain is found at 1250 to 1429; sequence STCQASGDPH…EEVVPDSPCL (180 aa). 2 disulfide bridges follow: Cys-1252/Cys-1390 and Cys-1274/Cys-1428. An N-linked (GlcNAc...) (complex) asparagine glycan is attached at Asn-1317. The region spanning 1532–1585 is the TIL 3 domain; that stretch reads CPPNSHYELCADTCSLGCSALSAPPQCQDGCAEGCQCDSGFLYNGQACVPIQQC. Residues 1671–1854 enclose the VWFD 4 domain; the sequence is ATCWLWGDPH…RAPGWDPLCW (184 aa). 3 disulfides stabilise this stretch: Cys-1673–Cys-1815, Cys-1695–Cys-1853, and Cys-1704–Cys-1812. N-linked (GlcNAc...) asparagine glycosylation occurs at Asn-1743. The TIL 4 domain occupies 1950 to 2007; it reads CPENSHYEVCGSPCPASCPSPAPLTTPAVCEGPCVEGCQCDAGFVLSADRCVPLNNGC. A VWFD 5 domain is found at 2070-2253; the sequence is AECQAWGDPH…VSKPCPSPCT (184 aa). 2 disulfides stabilise this stretch: Cys-2072/Cys-2211 and Cys-2094/Cys-2252. Asn-2138 carries an N-linked (GlcNAc...) asparagine glycan. The region spanning 2337 to 2390 is the TIL 5 domain; the sequence is CPAHSHYELCGDSCPGSCPSLSAPEGCESACREGCVCDAGFVLSGDTCVPVGQC. The VWFD 6 domain maps to 2451–2630; the sequence is TTCQASGDPH…EEVVPDSPCL (180 aa). 2 disulfides stabilise this stretch: Cys-2453–Cys-2591 and Cys-2475–Cys-2629. N-linked (GlcNAc...) asparagine glycosylation is present at Asn-2518. One can recognise a TIL 6 domain in the interval 2733 to 2786; that stretch reads CPQNSHYELCADTCSLGCSALSAPLQCPDGCAEGCQCDSGFLYNGQACVPIQQC. The 184-residue stretch at 2872 to 3055 folds into the VWFD 7 domain; the sequence is ATCWLWGDPH…RAPGWDPLCW (184 aa). 3 disulfide bridges follow: Cys-2874–Cys-3016, Cys-2896–Cys-3054, and Cys-2905–Cys-3013. One can recognise a TIL 7 domain in the interval 3151–3208; the sequence is CPENSHYEVCGPPCPASCPSPAPLTTPAVCEGPCVEGCQCDAGFVLSADRCVPLNNGC. Residues 3271-3454 form the VWFD 8 domain; the sequence is AECQAWGDPH…VSKPCPSPCT (184 aa). 2 cysteine pairs are disulfide-bonded: Cys-3273–Cys-3412 and Cys-3295–Cys-3453. The 54-residue stretch at 3538–3591 folds into the TIL 8 domain; the sequence is CPAHSHYELCGDSCPGSCPSLSAPEGCESACREGCVCDAGFVLSGDTCVPVGQC. Residues 3652-3831 enclose the VWFD 9 domain; the sequence is TTCQASGDPH…EEVVPDSPCL (180 aa). Cystine bridges form between Cys-3654-Cys-3792 and Cys-3676-Cys-3830. N-linked (GlcNAc...) asparagine glycosylation occurs at Asn-3719. A TIL 9 domain is found at 3934–3987; it reads CPQNSHYELCADTCSLGCSALSAPLQCPDGCAEGCQCDSGFLYNGQACVPIQQC. The region spanning 4073-4256 is the VWFD 10 domain; the sequence is ATCWLWGDPH…RAPGWDPLCW (184 aa). 3 disulfides stabilise this stretch: Cys-4075–Cys-4217, Cys-4097–Cys-4255, and Cys-4106–Cys-4214. Residue Asn-4145 is glycosylated (N-linked (GlcNAc...) asparagine). The TIL 10 domain occupies 4352–4409; the sequence is CPENSHYEVCGPPCPASCPSPAPLTTPAVCEGPCVEGCQCDAGFVLSADRCVPLNNGC. Positions 4472-4655 constitute a VWFD 11 domain; it reads AECQAWGDPH…VSKPCPSPCT (184 aa). Cystine bridges form between Cys-4474–Cys-4613 and Cys-4496–Cys-4654. Asn-4540 is a glycosylation site (N-linked (GlcNAc...) asparagine). Positions 4739 to 4792 constitute a TIL 11 domain; sequence CPAHSHYELCGDSCPVSCPSLSAPEGCESACREGCVCDAGFVLSGDTCVPVGQC. In terms of domain architecture, VWFD 12 spans 4854–5025; the sequence is GRCLANGGIH…RAPGSSKGCG (172 aa). Cystine bridges form between Cys-4856–Cys-4986 and Cys-4878–Cys-5024. Positions 5121-5174 constitute a TIL 12 domain; sequence CPAHSHYSICTRTCQGSCAALSGLTGCTTRCFEGCECDDRFLLSQGVCIPVQDC. The VWFD 13 domain maps to 5233–5404; it reads GLCVLSVGAN…WRAQDFSPCY (172 aa). An intrachain disulfide couples Cys-5235 to Cys-5372.

Interacts with the Fc portion of IgG and with MUC2. In terms of tissue distribution, mainly expressed in placenta and colon epithelium. Expressed in thyroid, and down-regulated in thyroid carcinomas. Present in serum, with higher levels in patients with various autoimmune diseases (at protein level).

It localises to the secreted. May be involved in the maintenance of the mucosal structure as a gel-like component of the mucosa. The polypeptide is IgGFc-binding protein (FCGBP) (Homo sapiens (Human)).